Consider the following 399-residue polypeptide: Elongation factor Tu (399 aa).

A tr-type G domain is found at lysine 10–glutamate 204. Residues glycine 19–threonine 26 are G1. A GTP-binding site is contributed by glycine 19–threonine 26. Threonine 26 serves as a coordination point for Mg(2+). The G2 stretch occupies residues glycine 60–asparagine 64. The G3 stretch occupies residues aspartate 81–glycine 84. Residues aspartate 81–histidine 85 and asparagine 136–aspartate 139 each bind GTP. Positions asparagine 136 to aspartate 139 are G4. Residues serine 174 to leucine 176 form a G5 region.

It belongs to the TRAFAC class translation factor GTPase superfamily. Classic translation factor GTPase family. EF-Tu/EF-1A subfamily. Monomer.

It is found in the cytoplasm. The enzyme catalyses GTP + H2O = GDP + phosphate + H(+). In terms of biological role, GTP hydrolase that promotes the GTP-dependent binding of aminoacyl-tRNA to the A-site of ribosomes during protein biosynthesis. This is Elongation factor Tu from Prochlorococcus marinus (strain MIT 9215).